Consider the following 493-residue polypeptide: GTPase Der (493 aa).

2 EngA-type G domains span residues 3–166 and 206–379; these read PVVA…AEAL and IKLA…KSAT. Residues 9-16, 56-60, 118-121, 212-219, 259-263, and 324-327 each bind GTP; these read GRPNVGKS, DTGGI, NKVD, DTAGV, and NKWD. In terms of domain architecture, KH-like spans 380-464; it reads TRVGTSVLTR…PIRIQFQNSE (85 aa).

Belongs to the TRAFAC class TrmE-Era-EngA-EngB-Septin-like GTPase superfamily. EngA (Der) GTPase family. In terms of assembly, associates with the 50S ribosomal subunit.

In terms of biological role, GTPase that plays an essential role in the late steps of ribosome biogenesis. The chain is GTPase Der from Vibrio atlanticus (strain LGP32) (Vibrio splendidus (strain Mel32)).